A 263-amino-acid polypeptide reads, in one-letter code: 3-methyl-2-oxobutanoate hydroxymethyltransferase (263 aa).

Positions 43 and 82 each coordinate Mg(2+). 3-methyl-2-oxobutanoate is bound by residues 43 to 44, D82, and K111; that span reads DS. Residue E113 participates in Mg(2+) binding. E179 serves as the catalytic Proton acceptor.

Belongs to the PanB family. As to quaternary structure, homodecamer; pentamer of dimers. Requires Mg(2+) as cofactor.

Its subcellular location is the cytoplasm. The enzyme catalyses 3-methyl-2-oxobutanoate + (6R)-5,10-methylene-5,6,7,8-tetrahydrofolate + H2O = 2-dehydropantoate + (6S)-5,6,7,8-tetrahydrofolate. It functions in the pathway cofactor biosynthesis; (R)-pantothenate biosynthesis; (R)-pantoate from 3-methyl-2-oxobutanoate: step 1/2. Functionally, catalyzes the reversible reaction in which hydroxymethyl group from 5,10-methylenetetrahydrofolate is transferred onto alpha-ketoisovalerate to form ketopantoate. This chain is 3-methyl-2-oxobutanoate hydroxymethyltransferase, found in Neisseria meningitidis serogroup B (strain ATCC BAA-335 / MC58).